The sequence spans 234 residues: Opacity protein opA55 (234 aa).

A signal peptide is located at residue Ala-1.

The protein belongs to the opacity porin family.

Its subcellular location is the cell outer membrane. Implicated in a number of adherence functions. OPA proteins are implicated in pathogenesis and are subject to phase variation. This is Opacity protein opA55 (opaE) from Neisseria gonorrhoeae.